We begin with the raw amino-acid sequence, 229 residues long: 3-dehydroquinate dehydratase (229 aa).

3-dehydroquinate-binding positions include 33 to 35 and Arg65; that span reads EWR. His121 serves as the catalytic Proton donor/acceptor. Residue Lys146 is the Schiff-base intermediate with substrate of the active site. 3-dehydroquinate is bound by residues Arg188, Ser207, and Gln211.

This sequence belongs to the type-I 3-dehydroquinase family. In terms of assembly, homodimer.

It catalyses the reaction 3-dehydroquinate = 3-dehydroshikimate + H2O. It participates in metabolic intermediate biosynthesis; chorismate biosynthesis; chorismate from D-erythrose 4-phosphate and phosphoenolpyruvate: step 3/7. In terms of biological role, involved in the third step of the chorismate pathway, which leads to the biosynthesis of aromatic amino acids. Catalyzes the cis-dehydration of 3-dehydroquinate (DHQ) and introduces the first double bond of the aromatic ring to yield 3-dehydroshikimate. The polypeptide is 3-dehydroquinate dehydratase (Lactococcus lactis subsp. cremoris (strain MG1363)).